A 244-amino-acid chain; its full sequence is NAD(P)H-hydrate epimerase (244 aa).

Residues 35 to 240 (IREIDSLAME…SIGVPLELLR (206 aa)) enclose the YjeF N-terminal domain. 82-86 (NNGGD) is a binding site for (6S)-NADPHX. 2 residues coordinate K(+): N83 and D150. (6S)-NADPHX is bound by residues 154-160 (GTGAKPP), Y165, and D183. K(+) is bound at residue T186.

The protein belongs to the NnrE/AIBP family. Requires K(+) as cofactor.

The enzyme catalyses (6R)-NADHX = (6S)-NADHX. The catalysed reaction is (6R)-NADPHX = (6S)-NADPHX. Catalyzes the epimerization of the S- and R-forms of NAD(P)HX, a damaged form of NAD(P)H that is a result of enzymatic or heat-dependent hydration. This is a prerequisite for the S-specific NAD(P)H-hydrate dehydratase to allow the repair of both epimers of NAD(P)HX. This is NAD(P)H-hydrate epimerase from Rhodopirellula baltica (strain DSM 10527 / NCIMB 13988 / SH1).